A 247-amino-acid chain; its full sequence is Protein AC124 (247 aa).

The protein resides in the host cytoplasm. The protein localises to the host nucleus. Accelerates mortality in insect larvae. The protein is Protein AC124 of Lepidoptera (butterflies and moths).